A 218-amino-acid polypeptide reads, in one-letter code: Riboflavin synthase (218 aa).

Lumazine-binding repeat units follow at residues 1–97 (MFTG…FGGH) and 98–194 (IVSG…ERLL). Residues 4–6 (GII), 48–50 (CLT), 62–67 (DLSIET), 101–103 (GHV), lysine 136, 145–147 (SLT), and 159–164 (TIVPHT) contribute to the 2,4-dihydroxypteridine site.

In terms of assembly, homotrimer.

It catalyses the reaction 2 6,7-dimethyl-8-(1-D-ribityl)lumazine + H(+) = 5-amino-6-(D-ribitylamino)uracil + riboflavin. The protein operates within cofactor biosynthesis; riboflavin biosynthesis; riboflavin from 2-hydroxy-3-oxobutyl phosphate and 5-amino-6-(D-ribitylamino)uracil: step 2/2. Its function is as follows. Catalyzes the dismutation of two molecules of 6,7-dimethyl-8-ribityllumazine, resulting in the formation of riboflavin and 5-amino-6-(D-ribitylamino)uracil. In Photobacterium phosphoreum, this protein is Riboflavin synthase.